Here is a 42-residue protein sequence, read N- to C-terminus: Photosystem II reaction center protein J (42 aa).

Residues 10-30 (IPLWLVGTVAGTAALTLVAVF) traverse the membrane as a helical segment.

Belongs to the PsbJ family. As to quaternary structure, PSII is composed of 1 copy each of membrane proteins PsbA, PsbB, PsbC, PsbD, PsbE, PsbF, PsbH, PsbI, PsbJ, PsbK, PsbL, PsbM, PsbT, PsbX, PsbY, PsbZ, Psb30/Ycf12, at least 3 peripheral proteins of the oxygen-evolving complex and a large number of cofactors. It forms dimeric complexes.

It localises to the plastid. It is found in the chloroplast thylakoid membrane. Functionally, one of the components of the core complex of photosystem II (PSII). PSII is a light-driven water:plastoquinone oxidoreductase that uses light energy to abstract electrons from H(2)O, generating O(2) and a proton gradient subsequently used for ATP formation. It consists of a core antenna complex that captures photons, and an electron transfer chain that converts photonic excitation into a charge separation. This is Photosystem II reaction center protein J from Chlorella vulgaris (Green alga).